The chain runs to 470 residues: Argininosuccinate lyase (470 aa).

This sequence belongs to the lyase 1 family. Argininosuccinate lyase subfamily.

It localises to the cytoplasm. It catalyses the reaction 2-(N(omega)-L-arginino)succinate = fumarate + L-arginine. It functions in the pathway amino-acid biosynthesis; L-arginine biosynthesis; L-arginine from L-ornithine and carbamoyl phosphate: step 3/3. This is Argininosuccinate lyase from Mycobacterium leprae (strain Br4923).